The primary structure comprises 136 residues: Large-conductance mechanosensitive channel (136 aa).

A run of 3 helical transmembrane segments spans residues I15 to V35, I38 to Q58, and G80 to V100.

It belongs to the MscL family. In terms of assembly, homopentamer.

Its subcellular location is the cell inner membrane. Functionally, channel that opens in response to stretch forces in the membrane lipid bilayer. May participate in the regulation of osmotic pressure changes within the cell. This Bartonella tribocorum (strain CIP 105476 / IBS 506) protein is Large-conductance mechanosensitive channel.